Here is a 504-residue protein sequence, read N- to C-terminus: Catalase (504 aa).

Residues histidine 56 and asparagine 129 contribute to the active site. Heme is bound at residue tyrosine 339.

This sequence belongs to the catalase family. In terms of assembly, homodimer. Heme serves as cofactor.

It catalyses the reaction 2 H2O2 = O2 + 2 H2O. Functionally, decomposes hydrogen peroxide into water and oxygen; serves to protect cells from the toxic effects of hydrogen peroxide. The sequence is that of Catalase (katA) from Staphylococcus epidermidis.